A 195-amino-acid polypeptide reads, in one-letter code: Chromophore lyase CpcT/CpeT 2 (195 aa).

The protein belongs to the CpcT/CpeT biliprotein lyase family.

Its function is as follows. Covalently attaches a chromophore to Cys residue(s) of phycobiliproteins. The protein is Chromophore lyase CpcT/CpeT 2 of Trichodesmium erythraeum (strain IMS101).